Consider the following 1129-residue polypeptide: Ubiquitin carboxyl-terminal hydrolase 15 (1129 aa).

Residues 1-26 are disordered; sequence MVLSNVDAEEVNMDSSMELEESSQEP. A compositionally biased stretch (acidic residues) spans 7–23; the sequence is DAEEVNMDSSMELEESS. The region spanning 51–204 is the MATH domain; that stretch reads HASYSWVVKN…NDEICISVTV (154 aa). Positions 230 to 545 constitute a USP domain; sequence VGLKNQGATC…NAYMLVYFRK (316 aa). The active-site Nucleophile is Cys239. The Proton acceptor role is filled by His481.

It belongs to the peptidase C19 family.

The protein resides in the nucleus. The enzyme catalyses Thiol-dependent hydrolysis of ester, thioester, amide, peptide and isopeptide bonds formed by the C-terminal Gly of ubiquitin (a 76-residue protein attached to proteins as an intracellular targeting signal).. Its function is as follows. Hydrolase that deubiquitinates target proteins. Cleaves the UBL propeptide in sde2. Involved in regulating the steady-state levels of proteins including prp4. In Schizosaccharomyces pombe (strain 972 / ATCC 24843) (Fission yeast), this protein is Ubiquitin carboxyl-terminal hydrolase 15.